The following is a 234-amino-acid chain: Carboxy-S-adenosyl-L-methionine synthase (234 aa).

S-adenosyl-L-methionine is bound by residues tyrosine 35, 60 to 62 (GCS), 109 to 110 (DV), asparagine 124, and arginine 191.

Belongs to the class I-like SAM-binding methyltransferase superfamily. Cx-SAM synthase family. Homodimer.

It carries out the reaction prephenate + S-adenosyl-L-methionine = carboxy-S-adenosyl-L-methionine + 3-phenylpyruvate + H2O. Its function is as follows. Catalyzes the conversion of S-adenosyl-L-methionine (SAM) to carboxy-S-adenosyl-L-methionine (Cx-SAM). The chain is Carboxy-S-adenosyl-L-methionine synthase from Campylobacter curvus (strain 525.92).